The sequence spans 150 residues: UPF0178 protein Bcep1808_1605 (150 aa).

It belongs to the UPF0178 family.

This is UPF0178 protein Bcep1808_1605 from Burkholderia vietnamiensis (strain G4 / LMG 22486) (Burkholderia cepacia (strain R1808)).